The chain runs to 223 residues: Protein Mis18-alpha (223 aa).

The disordered stretch occupies residues 1–30 (MAGTFSLEPCSTSSSCNHQGKRSESSLLEK). A compositionally biased stretch (polar residues) spans 9 to 18 (PCSTSSSCNH). The segment covering 21 to 30 (KRSESSLLEK) has biased composition (basic and acidic residues). Phosphoserine is present on residues Ser33, Ser36, and Ser37. Residues 71-169 (PLVFLCTRCR…SVEAVESYTL (99 aa)) form the Mis18 domain. Cys76, Cys79, Cys132, and Cys135 together coordinate Zn(2+). Lys153 is covalently cross-linked (Glycyl lysine isopeptide (Lys-Gly) (interchain with G-Cter in SUMO2)). Ser223 carries the phosphoserine modification.

Belongs to the mis18 family. Homodimer, and heterodimer with OIP5/MIS18B. Identified in a complex containing MIS18A, OIP5/MIS18B, MIS18BP1, RBBP7 and RBBP4.

It localises to the nucleus. The protein resides in the chromosome. The protein localises to the centromere. Required for recruitment of CENPA to centromeres and normal chromosome segregation during mitosis. The sequence is that of Protein Mis18-alpha (Mis18a) from Rattus norvegicus (Rat).